The chain runs to 242 residues: Leucyl/phenylalanyl-tRNA--protein transferase (242 aa).

It belongs to the L/F-transferase family.

Its subcellular location is the cytoplasm. It carries out the reaction N-terminal L-lysyl-[protein] + L-leucyl-tRNA(Leu) = N-terminal L-leucyl-L-lysyl-[protein] + tRNA(Leu) + H(+). The catalysed reaction is N-terminal L-arginyl-[protein] + L-leucyl-tRNA(Leu) = N-terminal L-leucyl-L-arginyl-[protein] + tRNA(Leu) + H(+). It catalyses the reaction L-phenylalanyl-tRNA(Phe) + an N-terminal L-alpha-aminoacyl-[protein] = an N-terminal L-phenylalanyl-L-alpha-aminoacyl-[protein] + tRNA(Phe). Functionally, functions in the N-end rule pathway of protein degradation where it conjugates Leu, Phe and, less efficiently, Met from aminoacyl-tRNAs to the N-termini of proteins containing an N-terminal arginine or lysine. This Alcanivorax borkumensis (strain ATCC 700651 / DSM 11573 / NCIMB 13689 / SK2) protein is Leucyl/phenylalanyl-tRNA--protein transferase.